The following is a 262-amino-acid chain: MSYFTQEQKTQWKDNGFVHLKGFLNEALAQDIKDWTQELYEWEEAPGKWMKYFETSSDTGERLLCRVENFIDYHKGIKGFLCGEMIYGMVSELMGEQAVLFKEKINFKYPGGAGFAYHQDAPAFTSFGQKYHITMMVSVDASNEENGCLRMAHGFSEEKTLEQEPDGTVCKKLAAKLDWRPLETGPGDLVLFNSYVPHYSEANTSDRSRRAMFITYNRLSEGEKRLDYFKDKREKFPPEAERIEGKDYSSAESLYNLGNPIK.

Residue lysine 108 participates in 2-oxoglutarate binding. Fe cation-binding residues include histidine 118, aspartate 120, and histidine 198.

The protein belongs to the PhyH family. It depends on Fe(2+) as a cofactor.

The enzyme catalyses (2-aminoethyl)phosphonate + 2-oxoglutarate + O2 = (1R)-(2-amino-1-hydroxyethyl)phosphonate + succinate + CO2. Activity is enhanced by ascorbate. Functionally, involved in the degradation of the organophosphonate 2-aminoethylphosphonic acid (2-AEP). Catalyzes the hydroxylation of 2-aminoethylphosphonic acid to yield (2-amino-1-hydroxyethyl)phosphonic acid. The chain is 2-aminoethylphosphonate dioxygenase from Uncultured bacterium HF130_AEPn_1.